Consider the following 87-residue polypeptide: Small ribosomal subunit protein bS20 (87 aa).

A disordered region spans residues 67 to 87; the sequence is HKNNGSRKASRLDAYVQSKQQ.

This sequence belongs to the bacterial ribosomal protein bS20 family.

Functionally, binds directly to 16S ribosomal RNA. This is Small ribosomal subunit protein bS20 from Metamycoplasma arthritidis (strain 158L3-1) (Mycoplasma arthritidis).